The following is a 394-amino-acid chain: Elongation factor Tu 1 (394 aa).

The region spanning 10–204 (KPHVNVGTIG…ALDTYIPEPA (195 aa)) is the tr-type G domain. The segment at 19-26 (GHVDHGKT) is G1. GTP is bound at residue 19–26 (GHVDHGKT). Position 26 (Thr-26) interacts with Mg(2+). Positions 60 to 64 (GITIN) are G2. The segment at 81–84 (DCPG) is G3. Residues 81–85 (DCPGH) and 136–139 (NKCD) contribute to the GTP site. Residues 136–139 (NKCD) form a G4 region. The segment at 174 to 176 (SAL) is G5.

The protein belongs to the TRAFAC class translation factor GTPase superfamily. Classic translation factor GTPase family. EF-Tu/EF-1A subfamily. As to quaternary structure, monomer.

The protein localises to the cytoplasm. The catalysed reaction is GTP + H2O = GDP + phosphate + H(+). GTP hydrolase that promotes the GTP-dependent binding of aminoacyl-tRNA to the A-site of ribosomes during protein biosynthesis. This Shewanella frigidimarina (strain NCIMB 400) protein is Elongation factor Tu 1.